Reading from the N-terminus, the 615-residue chain is Matrix metalloproteinase-25 (615 aa).

Residues 1–162 (MCFPGSQISP…AAGLVRRRRR (162 aa)) constitute a propeptide that is removed on maturation. A helical transmembrane segment spans residues 53-73 (ILRLPAFGLPLLALLLVPLLP). The short motif at 143-150 (PRCSLPDV) is the Cysteine switch element. Zn(2+)-binding residues include cysteine 145 and histidine 287. Residue glutamate 288 is part of the active site. Zn(2+)-binding residues include histidine 291 and histidine 297. A disordered region spans residues 336-366 (VSQNPNARPTRKPLVPPPQPPAMPPDSPATP). Pro residues predominate over residues 349-366 (LVPPPQPPAMPPDSPATP). Hemopexin repeat units lie at residues 368-417 (PDRC…WEGL), 421-466 (VKVI…GLPP), 467-515 (GEDV…DGAP), and 516-562 (FAPD…WLDC). Cysteine 371 and cysteine 562 are oxidised to a cystine. The tract at residues 547-582 (AESDSPQPIGPKWLDCPAPNSDPRVTSPPKTTSKTR) is disordered. The GPI-anchor amidated alanine moiety is linked to residue alanine 593. The propeptide at 594–615 (SEQLSPLLLPLLPLVAGEVFSY) is removed in mature form.

Belongs to the peptidase M10A family. Zn(2+) serves as cofactor. It depends on Ca(2+) as a cofactor. Post-translationally, the precursor is cleaved by a furin endopeptidase.

The protein localises to the cell membrane. Functionally, may activate progelatinase A. In Mus musculus (Mouse), this protein is Matrix metalloproteinase-25 (Mmp25).